A 150-amino-acid chain; its full sequence is Sulfur-rich protein, serovar D (150 aa).

The next 2 helical transmembrane spans lie at V41 to A61 and A67 to L87.

Its subcellular location is the membrane. The sequence is that of Sulfur-rich protein, serovar D (srp) from Chlamydia trachomatis serovar D (strain ATCC VR-885 / DSM 19411 / UW-3/Cx).